We begin with the raw amino-acid sequence, 284 residues long: MIHNETIRWPAPAKLNLFLYITGQREDGYHELQTLFQFIDLCDYLTITPNLSGKITLTPNIEGLALENNLIYKAAMILKTHTAANNGAHITLEKNLPMGGGLGGGSSDAATTLVALNHQWNINLTKDKLAEIGVLLGADVPVFIFGKAAIAEGIGEKLTPAYPAERSYLIAVPDCHISTAAVFQAKNLIRNTKKRTHLQLINQNWLNDCQPYVKKNYPKVAKVIEWLIEYAPTQLTGTGACVFSTFNSINEAEIVLHNTPDWLAALTAKGLNNSPLNELLATLK.

Lys-14 is a catalytic residue. 97–107 (PMGGGLGGGSS) contacts ATP. Residue Asp-139 is part of the active site.

The protein belongs to the GHMP kinase family. IspE subfamily.

It carries out the reaction 4-CDP-2-C-methyl-D-erythritol + ATP = 4-CDP-2-C-methyl-D-erythritol 2-phosphate + ADP + H(+). The protein operates within isoprenoid biosynthesis; isopentenyl diphosphate biosynthesis via DXP pathway; isopentenyl diphosphate from 1-deoxy-D-xylulose 5-phosphate: step 3/6. In terms of biological role, catalyzes the phosphorylation of the position 2 hydroxy group of 4-diphosphocytidyl-2C-methyl-D-erythritol. The polypeptide is 4-diphosphocytidyl-2-C-methyl-D-erythritol kinase (Psychromonas ingrahamii (strain DSM 17664 / CCUG 51855 / 37)).